We begin with the raw amino-acid sequence, 145 residues long: Ribosomal RNA large subunit methyltransferase H (145 aa).

S-adenosyl-L-methionine-binding positions include Leu-64, Gly-93, and 112 to 117 (LSPLTF).

This sequence belongs to the RNA methyltransferase RlmH family. As to quaternary structure, homodimer.

It localises to the cytoplasm. The catalysed reaction is pseudouridine(1915) in 23S rRNA + S-adenosyl-L-methionine = N(3)-methylpseudouridine(1915) in 23S rRNA + S-adenosyl-L-homocysteine + H(+). Functionally, specifically methylates the pseudouridine at position 1915 (m3Psi1915) in 23S rRNA. In Prochlorococcus marinus (strain NATL1A), this protein is Ribosomal RNA large subunit methyltransferase H.